Here is a 358-residue protein sequence, read N- to C-terminus: Spermatogenesis-associated protein 22 (358 aa).

Polar residues-rich tracts occupy residues 1–12 (MKRNLNESSARS), 30–51 (QPLT…DSYG), 81–121 (PASA…TSLR), and 150–159 (QQQKQFQTPE). 3 disordered regions span residues 1–51 (MKRN…DSYG), 81–122 (PASA…SLRT), and 150–172 (QQQK…AEVP).

As to quaternary structure, component of a multiprotein complex with MEIOB and RPA2. Interacts with MEIOB. Interacts with the complex BRME1:HSF2BP:BRCA2. Specifically expressed in gonadal germ cells, when male and female germ cells progress through prophase of meiosis I.

The protein localises to the chromosome. Its function is as follows. Meiosis-specific protein required for homologous recombination in meiosis I. The polypeptide is Spermatogenesis-associated protein 22 (Mus musculus (Mouse)).